A 462-amino-acid polypeptide reads, in one-letter code: Asparagine--tRNA ligase (462 aa).

The protein belongs to the class-II aminoacyl-tRNA synthetase family. As to quaternary structure, homodimer.

The protein resides in the cytoplasm. It catalyses the reaction tRNA(Asn) + L-asparagine + ATP = L-asparaginyl-tRNA(Asn) + AMP + diphosphate + H(+). The polypeptide is Asparagine--tRNA ligase (Borrelia garinii subsp. bavariensis (strain ATCC BAA-2496 / DSM 23469 / PBi) (Borreliella bavariensis)).